The chain runs to 377 residues: N5-carboxyaminoimidazole ribonucleotide synthase (377 aa).

ATP is bound by residues R93, K133, 138 to 144 (GYDGKGQ), 175 to 178 (EEFV), E183, H206, and 257 to 258 (NE). Positions 97 to 287 (KALLDHAGVR…QFENHLRAVC (191 aa)) constitute an ATP-grasp domain.

This sequence belongs to the PurK/PurT family. As to quaternary structure, homodimer.

It catalyses the reaction 5-amino-1-(5-phospho-beta-D-ribosyl)imidazole + hydrogencarbonate + ATP = 5-carboxyamino-1-(5-phospho-D-ribosyl)imidazole + ADP + phosphate + 2 H(+). It functions in the pathway purine metabolism; IMP biosynthesis via de novo pathway; 5-amino-1-(5-phospho-D-ribosyl)imidazole-4-carboxylate from 5-amino-1-(5-phospho-D-ribosyl)imidazole (N5-CAIR route): step 1/2. Its function is as follows. Catalyzes the ATP-dependent conversion of 5-aminoimidazole ribonucleotide (AIR) and HCO(3)(-) to N5-carboxyaminoimidazole ribonucleotide (N5-CAIR). This Vibrio vulnificus (strain CMCP6) protein is N5-carboxyaminoimidazole ribonucleotide synthase.